The sequence spans 204 residues: Small heat shock protein, chloroplastic (204 aa).

Residues 34–55 (QMGRVDHDHELDDRSNRAPISR) are disordered. The segment covering 37-49 (RVDHDHELDDRSN) has biased composition (basic and acidic residues). Residues 98–204 (GSGRAMRRGW…KKDVFQVMVD (107 aa)) enclose the sHSP domain.

The protein belongs to the small heat shock protein (HSP20) family.

Its subcellular location is the plastid. It is found in the chloroplast stroma. In Oxybasis rubra (Red goosefoot), this protein is Small heat shock protein, chloroplastic (HSP23).